Consider the following 427-residue polypeptide: Lipophilic envelope-spanning tunnel protein A (427 aa).

Topologically, residues 1 to 75 are cytoplasmic; that stretch reads MALNTPQITP…LTRLAAMAFT (75 aa). A helical membrane pass occupies residues 76–96; it reads MLLLMPFAWGEPLLHIWLLGI. The Periplasmic portion of the chain corresponds to 97–120; the sequence is RIDANVMQGIWQMTKQGDAITGSM. The chain crosses the membrane as a helical span at residues 121–141; sequence VFFCVIGAPLILVTSIAYLWF. Residues 142–269 lie on the Cytoplasmic side of the membrane; sequence GNRLGMNLRP…RHSLQKCWAA (128 aa). The chain crosses the membrane as a helical span at residues 270 to 290; that stretch reads LLASIVLLLPANLLPISIIYL. Residues 291 to 310 are Periplasmic-facing; it reads NGGRQEDTILSGIMSLASSN. A helical membrane pass occupies residues 311 to 331; sequence IAVAGIVFIASILVPFTKVIV. Topologically, residues 332–350 are cytoplasmic; it reads MFTLLLSIHFKCQQGLRTR. A helical membrane pass occupies residues 351–371; that stretch reads ILLLRMVTWIGRWSMLDLFVI. The Periplasmic portion of the chain corresponds to 372–382; the sequence is SLTMSLINRDQ. The helical transmembrane segment at 383–403 threads the bilayer; sequence ILAFTMGPAAFYFGAAVILTI. Topologically, residues 404-427 are cytoplasmic; sequence LAVEWLDSRLLWDAHESGNARFDD.

This sequence belongs to the PqiA family. In terms of assembly, may interact with LetB in the inner membrane.

The protein resides in the cell inner membrane. Functionally, could be part, together with LetB, of a system that transports lipids between the inner membrane and the outer membrane. Contributes to membrane integrity. The sequence is that of Lipophilic envelope-spanning tunnel protein A from Escherichia coli (strain K12).